The sequence spans 624 residues: Chaperone protein HtpG (624 aa).

The tract at residues 1–336 is a; substrate-binding; that stretch reads MKGQETRGFQ…SNDLPLNVSR (336 aa). Positions 337 to 552 are b; that stretch reads EILQDSSVTR…ADEMSTQMAK (216 aa). The c stretch occupies residues 553–624; sequence LFAAAGQAAP…IRRMNQLLAS (72 aa).

The protein belongs to the heat shock protein 90 family. Homodimer.

The protein localises to the cytoplasm. Its function is as follows. Molecular chaperone. Has ATPase activity. This chain is Chaperone protein HtpG, found in Klebsiella pneumoniae subsp. pneumoniae (strain ATCC 700721 / MGH 78578).